Consider the following 63-residue polypeptide: Chymotrypsin/elastase isoinhibitor 1 (63 aa).

Intrachain disulfides connect Cys5-Cys38, Cys14-Cys33, Cys17-Cys29, Cys21-Cys60, and Cys40-Cys54. Positions 5-60 constitute a TIL domain; the sequence is CGPNEVWTECTGCEMKCGPDENTPCPLMCRRPSCECSPGRGMRRTNDGKCIPASQC.

It belongs to the serine protease inhibitor-like (TIL domain-containing) family.

The protein resides in the secreted. In terms of biological role, defends the organism against the host's proteinases. The polypeptide is Chymotrypsin/elastase isoinhibitor 1 (Ascaris suum (Pig roundworm)).